Consider the following 382-residue polypeptide: Succinate--CoA ligase [ADP-forming] subunit beta (382 aa).

The region spanning 9 to 240 (KELFSKYGVK…PRDVTEFEAY (232 aa)) is the ATP-grasp domain. Residues Lys-45, 52-54 (GRG), Val-94, and Glu-99 each bind ATP. The Mg(2+) site is built by Asn-193 and Asp-207. Substrate contacts are provided by residues Asn-260 and 317-319 (GIT).

The protein belongs to the succinate/malate CoA ligase beta subunit family. As to quaternary structure, heterotetramer of two alpha and two beta subunits. Requires Mg(2+) as cofactor.

The enzyme catalyses succinate + ATP + CoA = succinyl-CoA + ADP + phosphate. The catalysed reaction is GTP + succinate + CoA = succinyl-CoA + GDP + phosphate. It participates in carbohydrate metabolism; tricarboxylic acid cycle; succinate from succinyl-CoA (ligase route): step 1/1. In terms of biological role, succinyl-CoA synthetase functions in the citric acid cycle (TCA), coupling the hydrolysis of succinyl-CoA to the synthesis of either ATP or GTP and thus represents the only step of substrate-level phosphorylation in the TCA. The beta subunit provides nucleotide specificity of the enzyme and binds the substrate succinate, while the binding sites for coenzyme A and phosphate are found in the alpha subunit. The sequence is that of Succinate--CoA ligase [ADP-forming] subunit beta from Pyrobaculum aerophilum (strain ATCC 51768 / DSM 7523 / JCM 9630 / CIP 104966 / NBRC 100827 / IM2).